The sequence spans 446 residues: Cyclin-T1-1 (446 aa).

This sequence belongs to the cyclin family. Cyclin T subfamily.

The chain is Cyclin-T1-1 (CYCT1-1) from Oryza sativa subsp. japonica (Rice).